A 230-amino-acid polypeptide reads, in one-letter code: Leucyl/phenylalanyl-tRNA--protein transferase (230 aa).

The protein belongs to the L/F-transferase family.

The protein localises to the cytoplasm. The enzyme catalyses N-terminal L-lysyl-[protein] + L-leucyl-tRNA(Leu) = N-terminal L-leucyl-L-lysyl-[protein] + tRNA(Leu) + H(+). The catalysed reaction is N-terminal L-arginyl-[protein] + L-leucyl-tRNA(Leu) = N-terminal L-leucyl-L-arginyl-[protein] + tRNA(Leu) + H(+). It catalyses the reaction L-phenylalanyl-tRNA(Phe) + an N-terminal L-alpha-aminoacyl-[protein] = an N-terminal L-phenylalanyl-L-alpha-aminoacyl-[protein] + tRNA(Phe). In terms of biological role, functions in the N-end rule pathway of protein degradation where it conjugates Leu, Phe and, less efficiently, Met from aminoacyl-tRNAs to the N-termini of proteins containing an N-terminal arginine or lysine. In Hamiltonella defensa subsp. Acyrthosiphon pisum (strain 5AT), this protein is Leucyl/phenylalanyl-tRNA--protein transferase.